Reading from the N-terminus, the 551-residue chain is Dihydroxy-acid dehydratase (551 aa).

D78 provides a ligand contact to Mg(2+). C119 lines the [2Fe-2S] cluster pocket. D120 and K121 together coordinate Mg(2+). N6-carboxylysine is present on K121. C191 is a binding site for [2Fe-2S] cluster. E442 contacts Mg(2+). S468 acts as the Proton acceptor in catalysis.

This sequence belongs to the IlvD/Edd family. Homodimer. Requires [2Fe-2S] cluster as cofactor. Mg(2+) serves as cofactor.

The catalysed reaction is (2R)-2,3-dihydroxy-3-methylbutanoate = 3-methyl-2-oxobutanoate + H2O. It catalyses the reaction (2R,3R)-2,3-dihydroxy-3-methylpentanoate = (S)-3-methyl-2-oxopentanoate + H2O. It participates in amino-acid biosynthesis; L-isoleucine biosynthesis; L-isoleucine from 2-oxobutanoate: step 3/4. Its pathway is amino-acid biosynthesis; L-valine biosynthesis; L-valine from pyruvate: step 3/4. Functionally, functions in the biosynthesis of branched-chain amino acids. Catalyzes the dehydration of (2R,3R)-2,3-dihydroxy-3-methylpentanoate (2,3-dihydroxy-3-methylvalerate) into 2-oxo-3-methylpentanoate (2-oxo-3-methylvalerate) and of (2R)-2,3-dihydroxy-3-methylbutanoate (2,3-dihydroxyisovalerate) into 2-oxo-3-methylbutanoate (2-oxoisovalerate), the penultimate precursor to L-isoleucine and L-valine, respectively. In Halothermothrix orenii (strain H 168 / OCM 544 / DSM 9562), this protein is Dihydroxy-acid dehydratase.